The following is a 434-amino-acid chain: Putative ZDHHC-type palmitoyltransferase 1 (434 aa).

2 helical membrane passes run 25–45 (AYFIVAMILMLIPEIPFLIFV) and 53–73 (ITAAIYPVSIYFWIASYIFLI). Positions 115–165 (KWCETCCLYRPPRANHCGICNNCVERFDHHCPWVGNCIGRRNYQTFLYFLY) constitute a DHHC domain. Cys-145 acts as the S-palmitoyl cysteine intermediate in catalysis. The chain crosses the membrane as a helical span at residues 160–180 (FLYFLYSLGFLCIWIMGFCVA). 9 N-linked (GlcNAc...) asparagine glycosylation sites follow: Asn-207, Asn-216, Asn-274, Asn-346, Asn-362, Asn-373, Asn-381, Asn-387, and Asn-393. The segment at 262-330 (TIPTPNNING…ISPPQMLQRQ (69 aa)) is disordered. The segment covering 267–316 (NNINGNNNNSINNNNNNNNNNNNNNNNNNNNNNNNNNINNGNSGGTTNNG) has biased composition (low complexity). Residues 365–434 (TISEDKPKNL…SLNHELQVNV (70 aa)) form a disordered region. Residues 373–387 (NLSNSNNNNNTNNKN) are compositionally biased toward low complexity. A compositionally biased stretch (basic and acidic residues) spans 409–419 (DDFKSDNDKEI). Residue Asn-420 is glycosylated (N-linked (GlcNAc...) asparagine). Positions 420–434 (NSSSLSLNHELQVNV) are enriched in polar residues.

Belongs to the DHHC palmitoyltransferase family.

The protein localises to the membrane. The catalysed reaction is L-cysteinyl-[protein] + hexadecanoyl-CoA = S-hexadecanoyl-L-cysteinyl-[protein] + CoA. This Dictyostelium discoideum (Social amoeba) protein is Putative ZDHHC-type palmitoyltransferase 1.